The chain runs to 208 residues: Outer-membrane lipoprotein LolB (208 aa).

Positions 1 to 21 are cleaved as a signal peptide; it reads MLSSKRRLMRLLPLASLLLTA. Residue Cys22 is the site of N-palmitoyl cysteine attachment. Cys22 carries the S-diacylglycerol cysteine lipid modification.

Belongs to the LolB family. As to quaternary structure, monomer.

It localises to the cell outer membrane. Its function is as follows. Plays a critical role in the incorporation of lipoproteins in the outer membrane after they are released by the LolA protein. The polypeptide is Outer-membrane lipoprotein LolB (Erwinia tasmaniensis (strain DSM 17950 / CFBP 7177 / CIP 109463 / NCPPB 4357 / Et1/99)).